Reading from the N-terminus, the 130-residue chain is MTRVRRGYIARRRRKKMRLFVSSFRGAHSKPIRIVAQQKIRALFSAHRDRDKKKRDFRRLWITRINAAIRETEKGIYYSYSKFIHDLYKRQLILNRKILAQIAILNRNSIYSIYNEILKKEDWKDAPEML.

This sequence belongs to the bacterial ribosomal protein bL20 family.

The protein localises to the plastid. Its subcellular location is the chloroplast. In terms of biological role, binds directly to 23S ribosomal RNA and is necessary for the in vitro assembly process of the 50S ribosomal subunit. It is not involved in the protein synthesizing functions of that subunit. This Fagopyrum esculentum subsp. ancestrale (Wild buckwheat) protein is Large ribosomal subunit protein bL20c.